A 396-amino-acid polypeptide reads, in one-letter code: Probable porphobilinogen deaminase (396 aa).

The disordered stretch occupies residues 159–224 (APALHREHER…DTASSSEFEQ (66 aa)). The interval 159–245 (APALHREHER…LQQSAMERDP (87 aa)) is insert. Residues 162 to 189 (LHREHERRTEAEKEAQSRDAREQRRGDY) show a composition bias toward basic and acidic residues. A compositionally biased stretch (acidic residues) spans 200–215 (LDTEDGEEGAADDGDD). S-(dipyrrolylmethanemethyl)cysteine is present on cysteine 328.

The protein belongs to the HMBS family. The cofactor is dipyrromethane.

It catalyses the reaction 4 porphobilinogen + H2O = hydroxymethylbilane + 4 NH4(+). The protein operates within porphyrin-containing compound metabolism; protoporphyrin-IX biosynthesis; coproporphyrinogen-III from 5-aminolevulinate: step 2/4. Its function is as follows. Tetrapolymerization of the monopyrrole PBG into the hydroxymethylbilane pre-uroporphyrinogen in several discrete steps. The protein is Probable porphobilinogen deaminase (hemC) of Halobacterium salinarum (strain ATCC 700922 / JCM 11081 / NRC-1) (Halobacterium halobium).